An 89-amino-acid chain; its full sequence is Phosphocarrier protein HPr (89 aa).

Residues 1–89 (MERTVTVVPE…DILSTPEAKQ (89 aa)) enclose the HPr domain. Catalysis depends on His14, which acts as the Pros-phosphohistidine intermediate. The residue at position 47 (Ser47) is a Phosphoserine; by HPrK/P.

It belongs to the HPr family.

It localises to the cytoplasm. With respect to regulation, phosphorylation on Ser-47 inhibits the phosphoryl transfer from enzyme I to HPr. General (non sugar-specific) component of the phosphoenolpyruvate-dependent sugar phosphotransferase system (sugar PTS). This major carbohydrate active-transport system catalyzes the phosphorylation of incoming sugar substrates concomitantly with their translocation across the cell membrane. The phosphoryl group from phosphoenolpyruvate (PEP) is transferred to the phosphoryl carrier protein HPr by enzyme I. Phospho-HPr then transfers it to the PTS EIIA domain. Is involved in fructose transport. The sequence is that of Phosphocarrier protein HPr (ptsH1) from Haloferax volcanii (strain ATCC 29605 / DSM 3757 / JCM 8879 / NBRC 14742 / NCIMB 2012 / VKM B-1768 / DS2) (Halobacterium volcanii).